The chain runs to 381 residues: Queuine tRNA-ribosyltransferase (381 aa).

Aspartate 96 (proton acceptor) is an active-site residue. Residues 96–100 (DSGGF), aspartate 150, glutamine 193, and glycine 220 each bind substrate. The RNA binding stretch occupies residues 251 to 257 (GVGSPDA). Catalysis depends on aspartate 270, which acts as the Nucleophile. Residues 275-279 (TRIAR) form an RNA binding; important for wobble base 34 recognition region. Residues cysteine 308, cysteine 310, cysteine 313, and histidine 339 each contribute to the Zn(2+) site.

It belongs to the queuine tRNA-ribosyltransferase family. Homodimer. Within each dimer, one monomer is responsible for RNA recognition and catalysis, while the other monomer binds to the replacement base PreQ1. It depends on Zn(2+) as a cofactor.

It carries out the reaction 7-aminomethyl-7-carbaguanine + guanosine(34) in tRNA = 7-aminomethyl-7-carbaguanosine(34) in tRNA + guanine. The protein operates within tRNA modification; tRNA-queuosine biosynthesis. Functionally, catalyzes the base-exchange of a guanine (G) residue with the queuine precursor 7-aminomethyl-7-deazaguanine (PreQ1) at position 34 (anticodon wobble position) in tRNAs with GU(N) anticodons (tRNA-Asp, -Asn, -His and -Tyr). Catalysis occurs through a double-displacement mechanism. The nucleophile active site attacks the C1' of nucleotide 34 to detach the guanine base from the RNA, forming a covalent enzyme-RNA intermediate. The proton acceptor active site deprotonates the incoming PreQ1, allowing a nucleophilic attack on the C1' of the ribose to form the product. After dissociation, two additional enzymatic reactions on the tRNA convert PreQ1 to queuine (Q), resulting in the hypermodified nucleoside queuosine (7-(((4,5-cis-dihydroxy-2-cyclopenten-1-yl)amino)methyl)-7-deazaguanosine). The chain is Queuine tRNA-ribosyltransferase from Bacillus velezensis (strain DSM 23117 / BGSC 10A6 / LMG 26770 / FZB42) (Bacillus amyloliquefaciens subsp. plantarum).